Reading from the N-terminus, the 147-residue chain is Nucleoside diphosphate kinase (147 aa).

Lys9, Phe57, Arg85, Thr91, Arg102, and Asn112 together coordinate ATP. His115 (pros-phosphohistidine intermediate) is an active-site residue.

The protein belongs to the NDK family. In terms of assembly, homotetramer. Mg(2+) serves as cofactor.

It localises to the cytoplasm. It catalyses the reaction a 2'-deoxyribonucleoside 5'-diphosphate + ATP = a 2'-deoxyribonucleoside 5'-triphosphate + ADP. It carries out the reaction a ribonucleoside 5'-diphosphate + ATP = a ribonucleoside 5'-triphosphate + ADP. In terms of biological role, major role in the synthesis of nucleoside triphosphates other than ATP. The ATP gamma phosphate is transferred to the NDP beta phosphate via a ping-pong mechanism, using a phosphorylated active-site intermediate. The polypeptide is Nucleoside diphosphate kinase (Listeria welshimeri serovar 6b (strain ATCC 35897 / DSM 20650 / CCUG 15529 / CIP 8149 / NCTC 11857 / SLCC 5334 / V8)).